We begin with the raw amino-acid sequence, 832 residues long: Beta-galactosidase (832 aa).

An N-terminal signal peptide occupies residues 1–25 (MALKLVLMLMVALLAAVWSPPAVTA). E183 serves as the catalytic Proton donor. The active-site Nucleophile is the E252. The SUEL-type lectin domain occupies 741 to 832 (AYGRPKVHLS…KKLAVEAICE (92 aa)).

The protein belongs to the glycosyl hydrolase 35 family.

It is found in the secreted. The protein localises to the extracellular space. It localises to the apoplast. The catalysed reaction is Hydrolysis of terminal non-reducing beta-D-galactose residues in beta-D-galactosides.. This is Beta-galactosidase from Asparagus officinalis (Garden asparagus).